We begin with the raw amino-acid sequence, 376 residues long: Chaperone protein DnaJ (376 aa).

Positions 5 to 70 (DYYEVLGVKK…QKRAAYDQYG (66 aa)) constitute a J domain. A CR-type zinc finger spans residues 131–209 (GVTKEIRIPT…CHGHGRVEKS (79 aa)). Residues C144, C147, C161, C164, C183, C186, C197, and C200 each coordinate Zn(2+). CXXCXGXG motif repeat units follow at residues 144 to 151 (CDVCHGSG), 161 to 168 (CSTCRGAG), 183 to 190 (CPTCHGSG), and 197 to 204 (CNKCHGHG).

The protein belongs to the DnaJ family. Homodimer. The cofactor is Zn(2+).

It is found in the cytoplasm. Functionally, participates actively in the response to hyperosmotic and heat shock by preventing the aggregation of stress-denatured proteins and by disaggregating proteins, also in an autonomous, DnaK-independent fashion. Unfolded proteins bind initially to DnaJ; upon interaction with the DnaJ-bound protein, DnaK hydrolyzes its bound ATP, resulting in the formation of a stable complex. GrpE releases ADP from DnaK; ATP binding to DnaK triggers the release of the substrate protein, thus completing the reaction cycle. Several rounds of ATP-dependent interactions between DnaJ, DnaK and GrpE are required for fully efficient folding. Also involved, together with DnaK and GrpE, in the DNA replication of plasmids through activation of initiation proteins. The chain is Chaperone protein DnaJ from Yersinia enterocolitica serotype O:8 / biotype 1B (strain NCTC 13174 / 8081).